The following is a 427-amino-acid chain: Glutamate-1-semialdehyde 2,1-aminomutase (427 aa).

Lys-265 is modified (N6-(pyridoxal phosphate)lysine).

It belongs to the class-III pyridoxal-phosphate-dependent aminotransferase family. HemL subfamily. In terms of assembly, homodimer. The cofactor is pyridoxal 5'-phosphate.

The protein resides in the cytoplasm. The catalysed reaction is (S)-4-amino-5-oxopentanoate = 5-aminolevulinate. It functions in the pathway porphyrin-containing compound metabolism; protoporphyrin-IX biosynthesis; 5-aminolevulinate from L-glutamyl-tRNA(Glu): step 2/2. The sequence is that of Glutamate-1-semialdehyde 2,1-aminomutase from Pseudomonas savastanoi pv. phaseolicola (strain 1448A / Race 6) (Pseudomonas syringae pv. phaseolicola (strain 1448A / Race 6)).